We begin with the raw amino-acid sequence, 215 residues long: 5'-deoxynucleotidase YGK1 (215 aa).

Residues 58–164 enclose the HD domain; sequence ISDHMYRMGL…VKDIDKYEML (107 aa). Residues histidine 61, histidine 89, aspartate 90, glutamate 93, aspartate 98, isoleucine 99, and aspartate 159 each coordinate a divalent metal cation.

The protein belongs to the HDDC2 family. Homodimer. It depends on Mn(2+) as a cofactor. Co(2+) is required as a cofactor. The cofactor is Mg(2+).

The enzyme catalyses a 2'-deoxyribonucleoside 5'-phosphate + H2O = a 2'-deoxyribonucleoside + phosphate. Functionally, catalyzes the dephosphorylation of the nucleoside 5'-monophosphates deoxyadenosine monophosphate (dAMP), deoxycytidine monophosphate (dCMP), deoxyguanosine monophosphate (dGMP) and deoxythymidine monophosphate (dTMP). This chain is 5'-deoxynucleotidase YGK1, found in Saccharomyces cerevisiae (strain ATCC 204508 / S288c) (Baker's yeast).